A 132-amino-acid polypeptide reads, in one-letter code: Interleukin-13 (132 aa).

Residues 1–18 form the signal peptide; the sequence is MALLLTMVIALTCLGGFA. 4 N-linked (GlcNAc...) asparagine glycosylation sites follow: asparagine 38, asparagine 49, asparagine 57, and asparagine 72. 2 cysteine pairs are disulfide-bonded: cysteine 48–cysteine 76 and cysteine 64–cysteine 90.

It belongs to the IL-4/IL-13 family. In terms of assembly, interacts with IL13RA2.

It localises to the secreted. Functionally, cytokine that plays important roles in allergic inflammation and immune response to parasite infection. Synergizes with IL2 in regulating interferon-gamma synthesis. Stimulates B-cell proliferation, and activation of eosinophils, basophils, and mast cells. Plays an important role in controlling IL33 activity by modulating the production of transmembrane and soluble forms of interleukin-1 receptor-like 1/IL1RL1. Displays the capacity to antagonize Th1-driven proinflammatory immune response and downregulates synthesis of many proinflammatory cytokines including IL1, IL6, IL10, IL12 and TNF-alpha through a mechanism that partially involves suppression of NF-kappa-B. Also functions on nonhematopoietic cells, including endothelial cells where it induces vascular cell adhesion protein 1/VCAM1, which is important in the recruitment of eosinophils. Exerts its biological effects through its receptors which comprises the IL4R chain and the IL13RA1 chain, to activate JAK1 and TYK2, leading to the activation of STAT6. Aside from IL13RA1, another receptor IL13RA2 acts as a high affinity decoy for IL13 and mediates internalization and depletion of extracellular IL13. In Macaca thibetana (Pere David's macaque), this protein is Interleukin-13 (IL13).